Here is a 196-residue protein sequence, read N- to C-terminus: dTTP/UTP pyrophosphatase (196 aa).

Asp77 serves as the catalytic Proton acceptor.

The protein belongs to the Maf family. YhdE subfamily. It depends on a divalent metal cation as a cofactor.

It localises to the cytoplasm. The catalysed reaction is dTTP + H2O = dTMP + diphosphate + H(+). It carries out the reaction UTP + H2O = UMP + diphosphate + H(+). Its function is as follows. Nucleoside triphosphate pyrophosphatase that hydrolyzes dTTP and UTP. May have a dual role in cell division arrest and in preventing the incorporation of modified nucleotides into cellular nucleic acids. The polypeptide is dTTP/UTP pyrophosphatase (Christiangramia forsetii (strain DSM 17595 / CGMCC 1.15422 / KT0803) (Gramella forsetii)).